Here is a 341-residue protein sequence, read N- to C-terminus: Dihydroorotate dehydrogenase (quinone) (341 aa).

Residues 61–65 and T85 each bind FMN; that span reads AGLDK. Position 65 (K65) interacts with substrate. 110–114 contributes to the substrate binding site; sequence NRMGF. FMN contacts are provided by N138 and N171. Residue N171 participates in substrate binding. The active-site Nucleophile is the S174. Position 176 (N176) interacts with substrate. K216 and T244 together coordinate FMN. 245–246 is a substrate binding site; the sequence is NT. FMN-binding positions include G267, G296, and 317-318; that span reads YS.

The protein belongs to the dihydroorotate dehydrogenase family. Type 2 subfamily. In terms of assembly, monomer. It depends on FMN as a cofactor.

Its subcellular location is the cell membrane. It carries out the reaction (S)-dihydroorotate + a quinone = orotate + a quinol. It functions in the pathway pyrimidine metabolism; UMP biosynthesis via de novo pathway; orotate from (S)-dihydroorotate (quinone route): step 1/1. Functionally, catalyzes the conversion of dihydroorotate to orotate with quinone as electron acceptor. This chain is Dihydroorotate dehydrogenase (quinone), found in Pseudomonas putida (strain GB-1).